The following is a 118-amino-acid chain: UPF0344 protein BLi01172/BL01343 (118 aa).

4 helical membrane-spanning segments follow: residues Ile-6 to Gly-26, Ile-33 to Phe-53, Glu-62 to Ile-82, and Ala-89 to Leu-109.

The protein belongs to the UPF0344 family.

The protein resides in the cell membrane. In Bacillus licheniformis (strain ATCC 14580 / DSM 13 / JCM 2505 / CCUG 7422 / NBRC 12200 / NCIMB 9375 / NCTC 10341 / NRRL NRS-1264 / Gibson 46), this protein is UPF0344 protein BLi01172/BL01343.